We begin with the raw amino-acid sequence, 48 residues long: Sperm protamine P1 (48 aa).

The protein belongs to the protamine P1 family. In terms of tissue distribution, testis.

It is found in the nucleus. The protein localises to the chromosome. Functionally, protamines substitute for histones in the chromatin of sperm during the haploid phase of spermatogenesis. They compact sperm DNA into a highly condensed, stable and inactive complex. The protein is Sperm protamine P1 (PRM1) of Eptesicus fuscus (Big brown bat).